Reading from the N-terminus, the 262-residue chain is Acyl-coenzyme A diphosphatase FITM2 (262 aa).

Topologically, residues 1–23 are cytoplasmic; the sequence is MEHLERCEWLLRGTLVRAAVRRY. A helical membrane pass occupies residues 24–44; the sequence is LPWALVASMLAGSLLKELSPL. The Lumenal portion of the chain corresponds to 45–57; sequence PESYLSNKRNVLN. A helical transmembrane segment spans residues 58-78; that stretch reads VYFVKVAWAWTFCLLLPFIAL. The Cytoplasmic portion of the chain corresponds to 79–93; the sequence is TNYHLTGKAGLVLRR. A helical transmembrane segment spans residues 94 to 114; it reads LSTLLVGTAIWYICTSIFSNI. Over 115-145 the chain is Lumenal; it reads EHYTGSCYQSPALEGVRKEHQSKQQCHQEGG. A helical transmembrane segment spans residues 146–166; it reads FWHGFDISGHSFLLTFCALMI. His155 is an active-site residue. Residues 167-190 lie on the Cytoplasmic side of the membrane; that stretch reads VEEMSVLHEVKTDRSHCLHTAITT. Residues 191 to 211 traverse the membrane as a helical segment; it reads LVVALGILTFIWVLMFLCTAV. The Lumenal segment spans residues 212-218; sequence YFHNLSQ. His214 is a catalytic residue. A helical transmembrane segment spans residues 219–239; that stretch reads KVFGTLFGLLSWYGTYGFWYP. At 240 to 262 the chain is on the cytoplasmic side; sequence KAFSPGLPPQSCSLNLKQDSYKK.

The protein belongs to the FIT family. FIT2 subfamily. As to expression, widely expressed.

Its subcellular location is the endoplasmic reticulum membrane. It carries out the reaction an acyl-CoA + H2O = an acyl-4'-phosphopantetheine + adenosine 3',5'-bisphosphate + 2 H(+). The catalysed reaction is (9Z)-octadecenoyl-CoA + H2O = S-(9Z-octadecenoyl)-4'-phosphopantetheine + adenosine 3',5'-bisphosphate + 2 H(+). The enzyme catalyses (5Z,8Z,11Z,14Z)-eicosatetraenoyl-CoA + H2O = S-(5Z,8Z,11Z,14Z-eicosatetraenoyl)-4'-phosphopantetheine + adenosine 3',5'-bisphosphate + 2 H(+). It catalyses the reaction hexadecanoyl-CoA + H2O = S-hexadecanoyl-4'-phosphopantetheine + adenosine 3',5'-bisphosphate + 2 H(+). Its function is as follows. Fatty acyl-coenzyme A (CoA) diphosphatase that hydrolyzes fatty acyl-CoA to yield acyl-4'-phosphopantetheine and adenosine 3',5'-bisphosphate. Preferentially hydrolyzes unsaturated long-chain acyl-CoA substrates such as oleoyl-CoA/(9Z)-octadecenoyl-CoA and arachidonoyl-CoA/(5Z,8Z,11Z,14Z)-eicosatetraenoyl-CoA in the endoplasmic reticulum (ER) lumen. This catalytic activity is required for maintaining ER structure and for lipid droplets (LDs) biogenesis, which are lipid storage organelles involved in maintaining lipid and energy homeostasis. Directly binds to diacylglycerol (DAGs) and triacylglycerol, which is also important for LD biogenesis. May support directional budding of nacent LDs from the ER into the cytosol by reducing DAG levels at sites of LD formation. Plays a role in the regulation of cell morphology and cytoskeletal organization. The sequence is that of Acyl-coenzyme A diphosphatase FITM2 from Homo sapiens (Human).